The chain runs to 447 residues: Tektin-4 (447 aa).

Coiled-coil stretches lie at residues 69-144 (ADRD…ALDA) and 304-423 (FGRR…TNSL). The span at 72-81 (DQSERQRHES) shows a compositional bias: basic and acidic residues. The segment at 72-104 (DQSERQRHESQQLAAETEALAQRTQQDSTRKVG) is disordered. The segment covering 82–97 (QQLAAETEALAQRTQQ) has biased composition (low complexity).

This sequence belongs to the tektin family. As to quaternary structure, microtubule inner protein component of sperm flagellar doublet microtubules. In terms of processing, ubiquitinated, leading to its degradation. Deubiquitinated by USP16, promoting its stability. As to expression, expressed in trachea multiciliated cells.

The protein resides in the cytoplasm. It localises to the cytoskeleton. It is found in the cilium axoneme. Its subcellular location is the flagellum axoneme. Functionally, microtubule inner protein (MIP) part of the dynein-decorated doublet microtubules (DMTs) in cilia and flagellar axoneme. Forms filamentous polymers in the walls of ciliary and flagellar microtubules. Contributes to normal sperm motility. This chain is Tektin-4 (TEKT4), found in Bos taurus (Bovine).